The chain runs to 954 residues: Kinesin-like protein KIN-14A (954 aa).

The Calponin-homology (CH) domain occupies 24-142; sequence ALRRHQAATW…CVISLKSYHE (119 aa). A coiled-coil region spans residues 242 to 293; that stretch reads LSRQLEKEQSSNSQVENRRRLLQAQESELLELKSMFQEVKIDFRTLKTQFQD. One can recognise a Kinesin motor domain in the interval 332–651; it reads NIRVFCRIRP…LKFAQRASCV (320 aa). Residue 413–420 participates in ATP binding; the sequence is GQTGSGKT. The stretch at 656-692 forms a coiled coil; it reads AHANKESNEIRELKEQVENLKRALAAKELEKSSFKLK. Basic and acidic residues predominate over residues 697 to 709; that stretch reads VRERAKQVPERTP. 3 disordered regions span residues 697–743, 824–858, and 882–954; these read VRER…TKLN, NLEVGQTDEPSSSAKLEKMTSSNATKKGSHLRKSI, and PAKI…KRWL. Polar residues-rich tracts occupy residues 831–849 and 886–898; these read DEPSSSAKLEKMTSSNATK and ANSTNNDVPSSIT.

The protein belongs to the TRAFAC class myosin-kinesin ATPase superfamily. Kinesin family. KIN-14 subfamily.

This Oryza sativa subsp. japonica (Rice) protein is Kinesin-like protein KIN-14A.